Reading from the N-terminus, the 322-residue chain is HPr kinase/phosphorylase (322 aa).

Residues His-146 and Lys-167 contribute to the active site. 161–168 contributes to the ATP binding site; sequence GDSGLGKS. Position 168 (Ser-168) interacts with Mg(2+). Asp-185 serves as the catalytic Proton acceptor; for phosphorylation activity. Proton donor; for dephosphorylation activity. The interval 209 to 218 is important for the catalytic mechanism of both phosphorylation and dephosphorylation; the sequence is LEVRGLGLLD. Glu-210 is a binding site for Mg(2+). Residue Arg-250 is part of the active site. The important for the catalytic mechanism of dephosphorylation stretch occupies residues 271 to 276; the sequence is QVAAGR.

It belongs to the HPrK/P family. Homohexamer. Mg(2+) is required as a cofactor.

The enzyme catalyses [HPr protein]-L-serine + ATP = [HPr protein]-O-phospho-L-serine + ADP + H(+). It catalyses the reaction [HPr protein]-O-phospho-L-serine + phosphate + H(+) = [HPr protein]-L-serine + diphosphate. Catalyzes the ATP- as well as the pyrophosphate-dependent phosphorylation of a specific serine residue in HPr, a phosphocarrier protein of the phosphoenolpyruvate-dependent sugar phosphotransferase system (PTS). HprK/P also catalyzes the pyrophosphate-producing, inorganic phosphate-dependent dephosphorylation (phosphorolysis) of seryl-phosphorylated HPr (P-Ser-HPr). The sequence is that of HPr kinase/phosphorylase from Paraburkholderia phytofirmans (strain DSM 17436 / LMG 22146 / PsJN) (Burkholderia phytofirmans).